The primary structure comprises 357 residues: Probable nitronate monooxygenase (357 aa).

FMN contacts are provided by residues N71, Q175, G180, G219, and 238 to 241 (QMGT).

It belongs to the nitronate monooxygenase family. NMO class I subfamily. FMN is required as a cofactor.

The enzyme catalyses 3 propionate 3-nitronate + 3 O2 + H2O = 3 3-oxopropanoate + 2 nitrate + nitrite + H2O2 + 3 H(+). Functionally, nitronate monooxygenase that uses molecular oxygen to catalyze the oxidative denitrification of alkyl nitronates. Acts on propionate 3-nitronate (P3N), the presumed physiological substrate. Probably functions in the detoxification of P3N, a metabolic poison produced by plants and fungi as a defense mechanism. This Staphylococcus haemolyticus (strain JCSC1435) protein is Probable nitronate monooxygenase.